The following is a 432-amino-acid chain: 3-phosphoshikimate 1-carboxyvinyltransferase (432 aa).

3-phosphoshikimate-binding residues include K22, S23, and R27. K22 is a phosphoenolpyruvate binding site. G96 and R127 together coordinate phosphoenolpyruvate. S173, S174, Q175, S201, D316, N339, and K343 together coordinate 3-phosphoshikimate. Q175 lines the phosphoenolpyruvate pocket. The active-site Proton acceptor is D316. Positions 347, 391, and 416 each coordinate phosphoenolpyruvate.

The protein belongs to the EPSP synthase family. As to quaternary structure, monomer.

Its subcellular location is the cytoplasm. It carries out the reaction 3-phosphoshikimate + phosphoenolpyruvate = 5-O-(1-carboxyvinyl)-3-phosphoshikimate + phosphate. The protein operates within metabolic intermediate biosynthesis; chorismate biosynthesis; chorismate from D-erythrose 4-phosphate and phosphoenolpyruvate: step 6/7. Catalyzes the transfer of the enolpyruvyl moiety of phosphoenolpyruvate (PEP) to the 5-hydroxyl of shikimate-3-phosphate (S3P) to produce enolpyruvyl shikimate-3-phosphate and inorganic phosphate. The sequence is that of 3-phosphoshikimate 1-carboxyvinyltransferase from Histophilus somni (strain 2336) (Haemophilus somnus).